A 214-amino-acid polypeptide reads, in one-letter code: Threonylcarbamoyl-AMP synthase (214 aa).

Residues 9–214 (TDSVIQAAHW…GDALTGQIIR (206 aa)) form the YrdC-like domain.

Belongs to the SUA5 family. TsaC subfamily.

Its subcellular location is the cytoplasm. The enzyme catalyses L-threonine + hydrogencarbonate + ATP = L-threonylcarbamoyladenylate + diphosphate + H2O. Its function is as follows. Required for the formation of a threonylcarbamoyl group on adenosine at position 37 (t(6)A37) in tRNAs that read codons beginning with adenine. Catalyzes the conversion of L-threonine, HCO(3)(-)/CO(2) and ATP to give threonylcarbamoyl-AMP (TC-AMP) as the acyladenylate intermediate, with the release of diphosphate. In Psychrobacter arcticus (strain DSM 17307 / VKM B-2377 / 273-4), this protein is Threonylcarbamoyl-AMP synthase.